We begin with the raw amino-acid sequence, 479 residues long: MSILVKNNIHWVGQRDWEVRDFHGTEYKTLRGSSYNSYLIREEKNVLIDTVDHKFSREFVQNLRSEIDLADIDYIIINHAEEDHAGALTELMAQIPDTPIYCTANAIDSINGHHHHPEWNFKVVKTGDTLDIGNGKQLIFVETPMLHWPDSMMTYMTGDAVLFSNDAFGQHYCDERLFNDEVDQTELFEQCQRYYANILTPFSRLVTPKITEILGFNLPVDMIATSHGVVWRDNPTQIVELYLKWAADYQEDRITIFYDTMSNNTRMMADAIAQGINEVDPNVAVKIFNVARSDKNEILTNVFRSKGVLVGTSTMNNVMMPKIAGLVEEMTGLRFRNKRASAFGSHGWSGGAVDRLSTRLQDAGFEMSLSLKAKWRPDLDALELCRQHGRDIARQWALAPLPETTQKTAPVEETTTCAAADLGPKMQCSVCQWIYDPALGEPLQDVAPGTPWSDVPDNFLCPECSLGKDVFDVLATEAK.

The segment at 30-210 is zinc metallo-hydrolase; that stretch reads LRGSSYNSYL…PFSRLVTPKI (181 aa). Residues His79, Glu81, Asp83, His147, Asp166, and His227 each contribute to the Fe cation site. The Flavodoxin-like domain maps to 254 to 393; it reads ITIFYDTMSN…LCRQHGRDIA (140 aa). FMN contacts are provided by residues 260 to 264 and 342 to 369; these read TMSNN and AFGS…EMSL. Positions 423–474 constitute a Rubredoxin-like domain; that stretch reads GPKMQCSVCQWIYDPALGEPLQDVAPGTPWSDVPDNFLCPECSLGKDVFDVL. 4 residues coordinate Fe cation: Cys428, Cys431, Cys461, and Cys464.

The protein in the N-terminal section; belongs to the zinc metallo-hydrolase group 3 family. In terms of assembly, homotetramer. Requires Fe cation as cofactor. FMN is required as a cofactor.

The protein localises to the cytoplasm. It participates in nitrogen metabolism; nitric oxide reduction. Its function is as follows. Anaerobic nitric oxide reductase; uses NADH to detoxify nitric oxide (NO), protecting several 4Fe-4S NO-sensitive enzymes. Has at least 2 reductase partners, only one of which (NorW, flavorubredoxin reductase) has been identified. NO probably binds to the di-iron center; electrons enter from the NorW at rubredoxin and are transferred sequentially to the FMN center and the di-iron center. Also able to function as an aerobic oxygen reductase. This chain is Anaerobic nitric oxide reductase flavorubredoxin, found in Salmonella paratyphi B (strain ATCC BAA-1250 / SPB7).